Here is a 324-residue protein sequence, read N- to C-terminus: Quinolinate synthase (324 aa).

Iminosuccinate-binding residues include histidine 39 and serine 56. Cysteine 101 serves as a coordination point for [4Fe-4S] cluster. Iminosuccinate-binding positions include 127–129 (YIN) and serine 144. Cysteine 187 is a binding site for [4Fe-4S] cluster. Residues 213–215 (HPE) and threonine 230 each bind iminosuccinate. Residue cysteine 280 coordinates [4Fe-4S] cluster.

The protein belongs to the quinolinate synthase family. Type 2 subfamily. [4Fe-4S] cluster serves as cofactor.

The protein localises to the cytoplasm. The enzyme catalyses iminosuccinate + dihydroxyacetone phosphate = quinolinate + phosphate + 2 H2O + H(+). Its pathway is cofactor biosynthesis; NAD(+) biosynthesis; quinolinate from iminoaspartate: step 1/1. In terms of biological role, catalyzes the condensation of iminoaspartate with dihydroxyacetone phosphate to form quinolinate. This chain is Quinolinate synthase, found in Trichormus variabilis (strain ATCC 29413 / PCC 7937) (Anabaena variabilis).